We begin with the raw amino-acid sequence, 851 residues long: DNA mismatch repair protein MutS (851 aa).

G602 to S609 lines the ATP pocket.

The protein belongs to the DNA mismatch repair MutS family.

Functionally, this protein is involved in the repair of mismatches in DNA. It is possible that it carries out the mismatch recognition step. This protein has a weak ATPase activity. The protein is DNA mismatch repair protein MutS of Streptococcus pyogenes serotype M49 (strain NZ131).